A 239-amino-acid polypeptide reads, in one-letter code: Hexuronic acid methyltransferase AglP (239 aa).

The protein belongs to the FkbM methyltransferase family.

The protein localises to the cytoplasm. It participates in cell surface structure biogenesis; S-layer biogenesis. Its function is as follows. Involved in the assembly of a N-linked pentasaccharide that decorates the S-layer glycoprotein and flagellins. S-adenosyl-L-methionine-dependent methyltransferase that modifies the hexuronic acid found at position 4 of the pentasaccharide. The sequence is that of Hexuronic acid methyltransferase AglP (aglP) from Haloferax volcanii (strain ATCC 29605 / DSM 3757 / JCM 8879 / NBRC 14742 / NCIMB 2012 / VKM B-1768 / DS2) (Halobacterium volcanii).